The chain runs to 601 residues: UvrABC system protein C (601 aa).

One can recognise a GIY-YIG domain in the interval 17-95 (TLPGVYRMLD…IKALAPRYNI (79 aa)). The 36-residue stretch at 204–239 (SELINELTRRMTAAAEAMAFEQAAELRDQIQALARV) folds into the UVR domain.

This sequence belongs to the UvrC family. In terms of assembly, interacts with UvrB in an incision complex.

It localises to the cytoplasm. In terms of biological role, the UvrABC repair system catalyzes the recognition and processing of DNA lesions. UvrC both incises the 5' and 3' sides of the lesion. The N-terminal half is responsible for the 3' incision and the C-terminal half is responsible for the 5' incision. The sequence is that of UvrABC system protein C from Chromobacterium violaceum (strain ATCC 12472 / DSM 30191 / JCM 1249 / CCUG 213 / NBRC 12614 / NCIMB 9131 / NCTC 9757 / MK).